The following is a 1479-amino-acid chain: WASH complex subunit 2 (1479 aa).

Positions 1–17 (MPEEQPQQQQQPVREQP) are enriched in low complexity. Disordered stretches follow at residues 1–25 (MPEEQPQQQQQPVREQPSNPDDVPW), 188–210 (GGLVEGGEQAGTDAQPSANTEKK), 240–564 (FIED…GGVK), 576–1383 (FSGK…FDDI), and 1419–1479 (TSTT…NLFD). The segment covering 242-279 (EDSDSDSSDEEDEEDVDAEDGSDESSSESSSDDDDEKD) has biased composition (acidic residues). Positions 334-349 (SKKSSNSYTSSLSDIL) are enriched in low complexity. Residues 422-431 (DDDLFGDSEE) are compositionally biased toward acidic residues. Composition is skewed to low complexity over residues 465-475 (TTTSSQPQQKK) and 514-532 (TPKPKSTTTSAAPTATTTK). At T535 the chain carries Phosphothreonine. Residues 542–552 (ASGSESTTGKS) show a composition bias toward polar residues. Over residues 595 to 620 (TESKASEDDFFSSDKKSTSATKKDAE) the composition is skewed to basic and acidic residues. The segment covering 709–723 (PKAPTTATTTTTTKP) has biased composition (low complexity). Positions 765 to 781 (TETKKQPITEEPKKKQD) are enriched in basic and acidic residues. The segment covering 802 to 814 (ASISPASPVSTIE) has biased composition (polar residues). The span at 839-885 (DLTKDEPAKSEPTKVEPTKVEPTKAEPTKVEPAKVEPTKVESDKKES) shows a compositional bias: basic and acidic residues. The segment covering 904-916 (KNPTTSSSTTATE) has biased composition (polar residues). Positions 951-968 (SSTTKKSTTTTTTTTSSK) are enriched in low complexity. Positions 981-990 (KKVEEKKSSD) are enriched in basic and acidic residues. Low complexity-rich tracts occupy residues 991-1000 (FDSFFSGSDD) and 1010-1021 (KTTTTPPLTSTT). Residues 1062-1075 (PLTSNNTKNRTKSI) are compositionally biased toward polar residues. The span at 1091 to 1107 (EKNRSESPTSEKAEPTK) shows a compositional bias: basic and acidic residues. Residues 1108–1123 (KTSNISSLQNKLSLNP) show a composition bias toward polar residues. A compositionally biased stretch (low complexity) spans 1147–1162 (STNNDNDSSATDLSDS). 2 stretches are compositionally biased toward polar residues: residues 1163–1174 (GRSSPSVTSPTL) and 1220–1236 (KSGTSAPNRSESPTPTQ). S1249 carries the post-translational modification Phosphoserine. The span at 1277-1292 (EKTSSGKSSPSPTIKS) shows a compositional bias: low complexity. Polar residues predominate over residues 1307–1317 (ASTTTKPTASE). The segment covering 1327-1358 (KKSEPETPKETPKETPKEKEQTKEKEQPKETP) has biased composition (basic and acidic residues). 2 stretches are compositionally biased toward low complexity: residues 1419–1445 (TSTTSKSTTTTTTTTTTKAKSTKAVDN) and 1452–1466 (NTTTKATPTKATPSK).

It belongs to the FAM21 family. In terms of assembly, probable component of the WASH complex.

This is WASH complex subunit 2 from Dictyostelium discoideum (Social amoeba).